A 170-amino-acid chain; its full sequence is Transmembrane protein 252 (170 aa).

Transmembrane regions (helical) follow at residues 8–28 and 40–60; these read ILCALALLMGFLMVCLGAFFI and LIAAYLLLPLGFVILLSGIFW. Positions 112–147 are disordered; that stretch reads CPAEREASGIPPPLYTETGLEFQDGNDSHPEAPPSY.

It localises to the membrane. This is Transmembrane protein 252 (TMEM252) from Pongo abelii (Sumatran orangutan).